The following is a 530-amino-acid chain: 2,3-bisphosphoglycerate-independent phosphoglycerate mutase (530 aa).

Aspartate 15 and serine 65 together coordinate Mn(2+). Serine 65 serves as the catalytic Phosphoserine intermediate. Residues histidine 126, 155-156, arginine 187, arginine 193, 257-260, and lysine 330 contribute to the substrate site; these read RD and RPDR. Mn(2+)-binding residues include aspartate 397, histidine 401, aspartate 438, histidine 439, and histidine 456.

The protein belongs to the BPG-independent phosphoglycerate mutase family. Monomer. It depends on Mn(2+) as a cofactor.

It carries out the reaction (2R)-2-phosphoglycerate = (2R)-3-phosphoglycerate. The protein operates within carbohydrate degradation; glycolysis; pyruvate from D-glyceraldehyde 3-phosphate: step 3/5. In terms of biological role, catalyzes the interconversion of 2-phosphoglycerate and 3-phosphoglycerate. This is 2,3-bisphosphoglycerate-independent phosphoglycerate mutase from Synechococcus sp. (strain JA-3-3Ab) (Cyanobacteria bacterium Yellowstone A-Prime).